We begin with the raw amino-acid sequence, 88 residues long: uncharacterized protein (88 aa).

The tract at residues 1–54 (AVDAYDDDDNLKNEEGDYYNESDDGYSGDEEEEEKQEEDEQDDDDLQFDDGVPE) is disordered. Positions 16 to 53 (GDYYNESDDGYSGDEEEEEKQEEDEQDDDDLQFDDGVP) are enriched in acidic residues.

Predominantly in developing fruit.

This is an uncharacterized protein from Fragaria ananassa (Strawberry).